We begin with the raw amino-acid sequence, 364 residues long: D-alanine--D-alanine ligase (364 aa).

The region spanning 141 to 346 is the ATP-grasp domain; it reads KNLFAQAGLR…YSELIERLIA (206 aa). 174–229 is a binding site for ATP; that stretch reads EQELGYPCFVKPANAGSSVGISKCKQRDDLKTAFAEAFKYDRKIIIEESIVGREIE. Mg(2+) contacts are provided by D300, E313, and N315.

This sequence belongs to the D-alanine--D-alanine ligase family. It depends on Mg(2+) as a cofactor. The cofactor is Mn(2+).

The protein resides in the cytoplasm. It catalyses the reaction 2 D-alanine + ATP = D-alanyl-D-alanine + ADP + phosphate + H(+). It functions in the pathway cell wall biogenesis; peptidoglycan biosynthesis. Cell wall formation. This Geobacillus thermodenitrificans (strain NG80-2) protein is D-alanine--D-alanine ligase.